The primary structure comprises 272 residues: Dihydropteroate synthase (272 aa).

The 251-residue stretch at 1-251 (MIKTKIMGIL…GVRVHNVLLN (251 aa)) folds into the Pterin-binding domain. Asparagine 11 provides a ligand contact to Mg(2+). Residues threonine 51, aspartate 89, asparagine 108, aspartate 172, lysine 208, and 244 to 246 (RVH) each bind (7,8-dihydropterin-6-yl)methyl diphosphate.

It belongs to the DHPS family. Homodimer. Mg(2+) serves as cofactor.

It catalyses the reaction (7,8-dihydropterin-6-yl)methyl diphosphate + 4-aminobenzoate = 7,8-dihydropteroate + diphosphate. The protein operates within cofactor biosynthesis; tetrahydrofolate biosynthesis; 7,8-dihydrofolate from 2-amino-4-hydroxy-6-hydroxymethyl-7,8-dihydropteridine diphosphate and 4-aminobenzoate: step 1/2. Functionally, catalyzes the condensation of para-aminobenzoate (pABA) with 6-hydroxymethyl-7,8-dihydropterin diphosphate (DHPt-PP) to form 7,8-dihydropteroate (H2Pte), the immediate precursor of folate derivatives. This is Dihydropteroate synthase (folP) from Staphylococcus epidermidis (strain ATCC 35984 / DSM 28319 / BCRC 17069 / CCUG 31568 / BM 3577 / RP62A).